Here is a 242-residue protein sequence, read N- to C-terminus: MSRLKAINGIMLRPIIWKRPSSNDAILQFIRQNQEISQSSVFQGTLYEHTVMRELSGKLSMNQLQKIGGSHDRGVDIRGQWPLDFVFGQVTKVVPLDAVPKRCKIHGTTLKPLRCKIEENDGKLDPLKALVQCKAFSGSKVSPREFRELVGTFASIVPDSQRNRSVILMCSPNLLTKEGLSLINTVKVPLIYLRIEMLQRIGDNYDVDNSGRLLNYYENDYAAALLQGCGIKEWLKLSLYRR.

The protein belongs to the RRG7 family.

It localises to the mitochondrion. The chain is Required for respiratory growth protein 7, mitochondrial (RRG7) from Zygosaccharomyces rouxii (strain ATCC 2623 / CBS 732 / NBRC 1130 / NCYC 568 / NRRL Y-229).